The primary structure comprises 851 residues: DNA mismatch repair protein MutS (851 aa).

Residue 602 to 609 (GPNMSGKS) coordinates ATP.

It belongs to the DNA mismatch repair MutS family.

This protein is involved in the repair of mismatches in DNA. It is possible that it carries out the mismatch recognition step. This protein has a weak ATPase activity. This Streptococcus pyogenes serotype M28 (strain MGAS6180) protein is DNA mismatch repair protein MutS.